A 267-amino-acid chain; its full sequence is Outer membrane protein assembly factor BamD (267 aa).

Residues Met-1 to Ala-16 form the signal peptide. Cys-17 carries N-palmitoyl cysteine lipidation. Cys-17 is lipidated: S-diacylglycerol cysteine.

It belongs to the BamD family. As to quaternary structure, part of the Bam complex.

Its subcellular location is the cell outer membrane. Functionally, part of the outer membrane protein assembly complex, which is involved in assembly and insertion of beta-barrel proteins into the outer membrane. Required for efficient transformation of Neisseria meningitidis by species-related DNA. The sequence is that of Outer membrane protein assembly factor BamD from Neisseria meningitidis serogroup A / serotype 4A (strain DSM 15465 / Z2491).